The chain runs to 361 residues: UDP-N-acetylglucosamine--N-acetylmuramyl-(pentapeptide) pyrophosphoryl-undecaprenol N-acetylglucosamine transferase (361 aa).

UDP-N-acetyl-alpha-D-glucosamine-binding positions include 13–15, Asn125, Arg167, Ser196, Ile251, 270–275, and Gln296; these read TGG and ALTVTE.

The protein belongs to the glycosyltransferase 28 family. MurG subfamily.

It is found in the cell inner membrane. The catalysed reaction is di-trans,octa-cis-undecaprenyl diphospho-N-acetyl-alpha-D-muramoyl-L-alanyl-D-glutamyl-meso-2,6-diaminopimeloyl-D-alanyl-D-alanine + UDP-N-acetyl-alpha-D-glucosamine = di-trans,octa-cis-undecaprenyl diphospho-[N-acetyl-alpha-D-glucosaminyl-(1-&gt;4)]-N-acetyl-alpha-D-muramoyl-L-alanyl-D-glutamyl-meso-2,6-diaminopimeloyl-D-alanyl-D-alanine + UDP + H(+). Its pathway is cell wall biogenesis; peptidoglycan biosynthesis. Cell wall formation. Catalyzes the transfer of a GlcNAc subunit on undecaprenyl-pyrophosphoryl-MurNAc-pentapeptide (lipid intermediate I) to form undecaprenyl-pyrophosphoryl-MurNAc-(pentapeptide)GlcNAc (lipid intermediate II). The chain is UDP-N-acetylglucosamine--N-acetylmuramyl-(pentapeptide) pyrophosphoryl-undecaprenol N-acetylglucosamine transferase from Psychrobacter cryohalolentis (strain ATCC BAA-1226 / DSM 17306 / VKM B-2378 / K5).